The following is a 301-amino-acid chain: Probable alpha-L-glutamate ligase (301 aa).

The region spanning Leu104–Glu287 is the ATP-grasp domain. Residues Lys141, Glu178–Tyr179, Asp187, and Arg211–Asn213 each bind ATP. Mg(2+)-binding residues include Asp248, Glu260, and Asn262. Residues Asp248, Glu260, and Asn262 each contribute to the Mn(2+) site.

The protein belongs to the RimK family. Mg(2+) is required as a cofactor. Requires Mn(2+) as cofactor.

The chain is Probable alpha-L-glutamate ligase from Pseudomonas putida (strain W619).